The following is a 367-amino-acid chain: Histidinol-phosphate aminotransferase (367 aa).

N6-(pyridoxal phosphate)lysine is present on Lys-226.

This sequence belongs to the class-II pyridoxal-phosphate-dependent aminotransferase family. Histidinol-phosphate aminotransferase subfamily. In terms of assembly, homodimer. Pyridoxal 5'-phosphate is required as a cofactor.

It carries out the reaction L-histidinol phosphate + 2-oxoglutarate = 3-(imidazol-4-yl)-2-oxopropyl phosphate + L-glutamate. It participates in amino-acid biosynthesis; L-histidine biosynthesis; L-histidine from 5-phospho-alpha-D-ribose 1-diphosphate: step 7/9. The protein is Histidinol-phosphate aminotransferase of Aliarcobacter butzleri (strain RM4018) (Arcobacter butzleri).